Reading from the N-terminus, the 521-residue chain is GMP synthase [glutamine-hydrolyzing] (521 aa).

Residues 8–203 (KILILDFGAQ…VVDVCGCQTL (196 aa)) enclose the Glutamine amidotransferase type-1 domain. Residue cysteine 85 is the Nucleophile of the active site. Active-site residues include histidine 177 and glutamate 179. The region spanning 204 to 396 (WTAANIIDDQ…LGLPRTMVYR (193 aa)) is the GMPS ATP-PPase domain. Position 231–237 (231–237 (SGGVDSS)) interacts with ATP.

Homodimer.

It carries out the reaction XMP + L-glutamine + ATP + H2O = GMP + L-glutamate + AMP + diphosphate + 2 H(+). The protein operates within purine metabolism; GMP biosynthesis; GMP from XMP (L-Gln route): step 1/1. Catalyzes the synthesis of GMP from XMP. The polypeptide is GMP synthase [glutamine-hydrolyzing] (Stenotrophomonas maltophilia (strain R551-3)).